We begin with the raw amino-acid sequence, 321 residues long: Putative sulfotransferase vep-2 (321 aa).

The helical transmembrane segment at 11–31 threads the bilayer; sequence IARVLIIIASISVICITLFIS.

This sequence to C.elegans C41C4.1 and C18B2.2.

It is found in the membrane. This chain is Putative sulfotransferase vep-2, found in Caenorhabditis elegans.